The chain runs to 267 residues: 3-methyl-2-oxobutanoate hydroxymethyltransferase (267 aa).

Mg(2+) is bound by residues D41 and D80. Residues D41–S42, D80, and K109 contribute to the 3-methyl-2-oxobutanoate site. A Mg(2+)-binding site is contributed by E111. The Proton acceptor role is filled by E178.

This sequence belongs to the PanB family. In terms of assembly, homodecamer; pentamer of dimers. It depends on Mg(2+) as a cofactor.

Its subcellular location is the cytoplasm. The catalysed reaction is 3-methyl-2-oxobutanoate + (6R)-5,10-methylene-5,6,7,8-tetrahydrofolate + H2O = 2-dehydropantoate + (6S)-5,6,7,8-tetrahydrofolate. It functions in the pathway cofactor biosynthesis; (R)-pantothenate biosynthesis; (R)-pantoate from 3-methyl-2-oxobutanoate: step 1/2. Catalyzes the reversible reaction in which hydroxymethyl group from 5,10-methylenetetrahydrofolate is transferred onto alpha-ketoisovalerate to form ketopantoate. This Kosmotoga olearia (strain ATCC BAA-1733 / DSM 21960 / TBF 19.5.1) protein is 3-methyl-2-oxobutanoate hydroxymethyltransferase.